The primary structure comprises 102 residues: Large ribosomal subunit protein bL21 (102 aa).

It belongs to the bacterial ribosomal protein bL21 family. As to quaternary structure, part of the 50S ribosomal subunit. Contacts protein L20.

In terms of biological role, this protein binds to 23S rRNA in the presence of protein L20. The sequence is that of Large ribosomal subunit protein bL21 from Campylobacter hominis (strain ATCC BAA-381 / DSM 21671 / CCUG 45161 / LMG 19568 / NCTC 13146 / CH001A).